The primary structure comprises 258 residues: Proteasome subunit alpha (258 aa).

The protein belongs to the peptidase T1A family. The 20S proteasome core is composed of 14 alpha and 14 beta subunits that assemble into four stacked heptameric rings, resulting in a barrel-shaped structure. The two inner rings, each composed of seven catalytic beta subunits, are sandwiched by two outer rings, each composed of seven alpha subunits. The catalytic chamber with the active sites is on the inside of the barrel. Has a gated structure, the ends of the cylinder being occluded by the N-termini of the alpha-subunits. Is capped at one or both ends by the proteasome regulatory ATPase, PAN.

The protein localises to the cytoplasm. The formation of the proteasomal ATPase PAN-20S proteasome complex, via the docking of the C-termini of PAN into the intersubunit pockets in the alpha-rings, triggers opening of the gate for substrate entry. Interconversion between the open-gate and close-gate conformations leads to a dynamic regulation of the 20S proteasome proteolysis activity. Functionally, component of the proteasome core, a large protease complex with broad specificity involved in protein degradation. The polypeptide is Proteasome subunit alpha (Aeropyrum pernix (strain ATCC 700893 / DSM 11879 / JCM 9820 / NBRC 100138 / K1)).